A 419-amino-acid chain; its full sequence is L-rhamnose isomerase (419 aa).

Positions 262, 294, and 296 each coordinate Mn(2+).

It belongs to the rhamnose isomerase family. As to quaternary structure, homotetramer. The cofactor is Mn(2+).

It localises to the cytoplasm. The catalysed reaction is L-rhamnopyranose = L-rhamnulose. It participates in carbohydrate degradation; L-rhamnose degradation; glycerone phosphate from L-rhamnose: step 1/3. In terms of biological role, catalyzes the interconversion of L-rhamnose and L-rhamnulose. The polypeptide is L-rhamnose isomerase (Escherichia coli O81 (strain ED1a)).